The sequence spans 150 residues: Large ribosomal subunit protein bL9 (150 aa).

It belongs to the bacterial ribosomal protein bL9 family.

Functionally, binds to the 23S rRNA. This chain is Large ribosomal subunit protein bL9, found in Shewanella baltica (strain OS155 / ATCC BAA-1091).